Here is a 459-residue protein sequence, read N- to C-terminus: MNVAFEVKDRDVAGRLGRLEVNGRRLKTPALLPVVNPNKPTLDPREISKLGFDGVITNAYIIRKHEHLREQALEEGVHGLLGFDGFVMTDSGSFQLAEYGDVEVSNEEIVRFQAKIGSDVGTILDVPTPPDAPRSRVERDLETTLKRAREAVELDEHPPLALTVQGSTYEDLRRLCAEKLAELPAAVYPVGGVVPLLEEYRFVDVVRVVLAAKSSLPPHRPVHLFGCGHPLAIPLAVAMGCDLFDSASYAIYARSDRYMSILGTLKLEELETFPCSCPACTRHDPDDVREMEPRERTRVLATHNLYELRRVIETTRQAIVSGELWELAESVCRAHPRAWAGMVELARRGGELERWCPAVKRSVFVCDEVSKGRPELRLYRRRLRDRFGELSGRKVVKGISRPYAEIVEWLEPWELAFADEWLGVVPGELSWSYPCHCLVEPSGDDEGEDRRRGEEGRRR.

Catalysis depends on D90, which acts as the Nucleophile. Substrate contacts are provided by D125 and G192. Zn(2+)-binding residues include C275, C277, and C280.

This sequence belongs to the archaeosine tRNA-ribosyltransferase family. It depends on Zn(2+) as a cofactor.

It carries out the reaction guanosine(15) in tRNA + 7-cyano-7-deazaguanine = 7-cyano-7-carbaguanosine(15) in tRNA + guanine. It participates in tRNA modification; archaeosine-tRNA biosynthesis. Exchanges the guanine residue with 7-cyano-7-deazaguanine (preQ0) at position 15 in the dihydrouridine loop (D-loop) of archaeal tRNAs. The sequence is that of tRNA-guanine(15) transglycosylase from Methanopyrus kandleri (strain AV19 / DSM 6324 / JCM 9639 / NBRC 100938).